A 926-amino-acid polypeptide reads, in one-letter code: Alpha-aminoadipic semialdehyde synthase, mitochondrial (926 aa).

Residues 1–27 (MLRAQRLRLARLRACVSRGLHHKPVMA) constitute a mitochondrion transit peptide. Positions 28-455 (LRREDVNAWE…DAVITSNGLL (428 aa)) are lysine-ketoglutarate reductase. 3 positions are modified to N6-acetyllysine: lysine 48, lysine 52, and lysine 56. N6-acetyllysine; alternate is present on lysine 93. At lysine 93 the chain carries N6-succinyllysine; alternate. Lysine 128 carries the post-translational modification N6-acetyllysine. Lysine 138 is subject to N6-acetyllysine; alternate. An N6-succinyllysine; alternate modification is found at lysine 138. Lysine 274 is subject to N6-succinyllysine. At lysine 286 the chain carries N6-acetyllysine; alternate. Residue lysine 286 is modified to N6-succinyllysine; alternate. Lysine 333 bears the N6-succinyllysine mark. Lysine 458 bears the N6-acetyllysine; alternate mark. Lysine 458 is modified (N6-succinyllysine; alternate). A saccharopine dehydrogenase region spans residues 477 to 926 (MSTKKKVLVL…VFNTQSTIKL (450 aa)). NAD(+) contacts are provided by serine 488, aspartate 512, and glutamine 516. 2 positions are modified to N6-acetyllysine; alternate: lysine 523 and lysine 535. Lysine 523 and lysine 535 each carry N6-succinyllysine; alternate. NAD(+)-binding residues include leucine 554, alanine 576, and serine 577. 577–578 (SY) lines the L-saccharopine pocket. Residue lysine 584 is modified to N6-acetyllysine; alternate. Lysine 584 bears the N6-succinyllysine; alternate mark. 3 residues coordinate NAD(+): leucine 603, aspartate 604, and proline 605. Aspartate 604 serves as a coordination point for L-saccharopine. Arginine 703 serves as a coordination point for L-saccharopine. Lysine 707 is subject to N6-acetyllysine. Position 724-726 (724-726 (TLR)) interacts with L-saccharopine. Position 732 is an N6-succinyllysine (lysine 732). Lysine 739 is modified (N6-acetyllysine). Lysine 761 bears the N6-acetyllysine; alternate mark. N6-succinyllysine; alternate is present on lysine 761. Residues lysine 778 and lysine 780 each carry the N6-acetyllysine modification.

This sequence in the N-terminal section; belongs to the AlaDH/PNT family. In the C-terminal section; belongs to the saccharopine dehydrogenase family. As to quaternary structure, homotetramer.

The protein localises to the mitochondrion. It catalyses the reaction L-saccharopine + NADP(+) + H2O = L-lysine + 2-oxoglutarate + NADPH + H(+). It carries out the reaction L-saccharopine + NAD(+) + H2O = (S)-2-amino-6-oxohexanoate + L-glutamate + NADH + H(+). It functions in the pathway amino-acid degradation; L-lysine degradation via saccharopine pathway; glutaryl-CoA from L-lysine: step 1/6. The protein operates within amino-acid degradation; L-lysine degradation via saccharopine pathway; glutaryl-CoA from L-lysine: step 2/6. Bifunctional enzyme that catalyzes the first two steps in lysine degradation. The polypeptide is Alpha-aminoadipic semialdehyde synthase, mitochondrial (Rattus norvegicus (Rat)).